Consider the following 93-residue polypeptide: U12-lycotoxin-Ls1a (93 aa).

Positions 1-18 (MKFAVILLFSLVVLAVAS) are cleaved as a signal peptide. The propeptide occupies 19–38 (ESVEEVRREIDIEDLPEQQR).

The protein belongs to the neurotoxin 31 family. Contains 5 disulfide bonds. In terms of tissue distribution, expressed by the venom gland.

It localises to the secreted. The sequence is that of U12-lycotoxin-Ls1a from Lycosa singoriensis (Wolf spider).